The following is a 563-amino-acid chain: Arginine--tRNA ligase (563 aa).

Residues 121-131 (PNIAKPFSIGH) carry the 'HIGH' region motif.

The protein belongs to the class-I aminoacyl-tRNA synthetase family. Monomer.

It localises to the cytoplasm. It carries out the reaction tRNA(Arg) + L-arginine + ATP = L-arginyl-tRNA(Arg) + AMP + diphosphate. The sequence is that of Arginine--tRNA ligase from Streptococcus pyogenes serotype M4 (strain MGAS10750).